A 299-amino-acid polypeptide reads, in one-letter code: Protoheme IX farnesyltransferase 1 (299 aa).

8 helical membrane passes run Val25–Val45, Trp47–Val67, Thr95–Phe115, Leu119–Leu139, Ile147–Gly167, Pro173–Ile193, Ala226–Ile246, and Ile279–Leu299.

The protein belongs to the UbiA prenyltransferase family. Protoheme IX farnesyltransferase subfamily.

It localises to the cell inner membrane. The enzyme catalyses heme b + (2E,6E)-farnesyl diphosphate + H2O = Fe(II)-heme o + diphosphate. Its pathway is porphyrin-containing compound metabolism; heme O biosynthesis; heme O from protoheme: step 1/1. Its function is as follows. Converts heme B (protoheme IX) to heme O by substitution of the vinyl group on carbon 2 of heme B porphyrin ring with a hydroxyethyl farnesyl side group. The protein is Protoheme IX farnesyltransferase 1 of Pseudomonas fluorescens (strain Pf0-1).